A 405-amino-acid polypeptide reads, in one-letter code: Na(+)-translocating NADH-quinone reductase subunit F (405 aa).

The helical transmembrane segment at 3 to 23 threads the bilayer; the sequence is IILGIVMFTVIVLALALMILF. The 2Fe-2S ferredoxin-type domain maps to 32 to 124; the sequence is GDITIKVNDE…DMDIEVPEEV (93 aa). Cys67, Cys73, Cys76, and Cys108 together coordinate [2Fe-2S] cluster. Positions 127-267 constitute an FAD-binding FR-type domain; that stretch reads VKKWECTVIS…SGPFGEFFAK (141 aa).

Belongs to the NqrF family. As to quaternary structure, composed of six subunits; NqrA, NqrB, NqrC, NqrD, NqrE and NqrF. Requires [2Fe-2S] cluster as cofactor. FAD serves as cofactor.

The protein localises to the cell inner membrane. The enzyme catalyses a ubiquinone + n Na(+)(in) + NADH + H(+) = a ubiquinol + n Na(+)(out) + NAD(+). NQR complex catalyzes the reduction of ubiquinone-1 to ubiquinol by two successive reactions, coupled with the transport of Na(+) ions from the cytoplasm to the periplasm. The first step is catalyzed by NqrF, which accepts electrons from NADH and reduces ubiquinone-1 to ubisemiquinone by a one-electron transfer pathway. The protein is Na(+)-translocating NADH-quinone reductase subunit F of Neisseria gonorrhoeae (strain ATCC 700825 / FA 1090).